We begin with the raw amino-acid sequence, 413 residues long: 26S proteasome regulatory subunit 6B homolog (413 aa).

A disordered region spans residues 1 to 30 (MATAMVLDPKPAEKLPATRPETSITDVPSD). A coiled-coil region spans residues 32 to 80 (EDDLYARLKSLQRQLEFIEIQEEYVKDELKNLRREHLRAQEEVKRIQSV). 201–208 (GPPGTGKT) provides a ligand contact to ATP.

This sequence belongs to the AAA ATPase family.

The protein localises to the cytoplasm. It localises to the nucleus. Its function is as follows. The 26S proteasome is involved in the ATP-dependent degradation of ubiquitinated proteins. The regulatory (or ATPase) complex confers ATP dependency and substrate specificity to the 26S complex. This Solanum tuberosum (Potato) protein is 26S proteasome regulatory subunit 6B homolog.